The chain runs to 339 residues: RNA 3'-terminal phosphate cyclase (339 aa).

Residues glutamine 103 and 283-287 each bind ATP; that span reads HLADQ. Catalysis depends on histidine 308, which acts as the Tele-AMP-histidine intermediate.

The protein belongs to the RNA 3'-terminal cyclase family. Type 1 subfamily.

It is found in the cytoplasm. The catalysed reaction is a 3'-end 3'-phospho-ribonucleotide-RNA + ATP = a 3'-end 2',3'-cyclophospho-ribonucleotide-RNA + AMP + diphosphate. In terms of biological role, catalyzes the conversion of 3'-phosphate to a 2',3'-cyclic phosphodiester at the end of RNA. The mechanism of action of the enzyme occurs in 3 steps: (A) adenylation of the enzyme by ATP; (B) transfer of adenylate to an RNA-N3'P to produce RNA-N3'PP5'A; (C) and attack of the adjacent 2'-hydroxyl on the 3'-phosphorus in the diester linkage to produce the cyclic end product. The biological role of this enzyme is unknown but it is likely to function in some aspects of cellular RNA processing. In Salmonella enteritidis PT4 (strain P125109), this protein is RNA 3'-terminal phosphate cyclase.